The chain runs to 464 residues: L-cystine uptake protein TcyP (464 aa).

A run of 10 helical transmembrane segments spans residues 3-23, 34-54, 73-93, 107-127, 184-204, 225-245, 263-283, 347-367, 371-391, and 395-415; these read TLLV…LYYM, VFTA…IYEP, YVKL…ISAF, GLII…GIAA, PTST…FIGV, IVMR…LALM, FVLA…LLIA, AGIY…IDPL, FILT…GVGG, and FAAL…ALVI.

Belongs to the dicarboxylate/amino acid:cation symporter (DAACS) (TC 2.A.23) family.

Its subcellular location is the membrane. Mediates uptake of L-cystine, the oxidized form of L-cysteine. The chain is L-cystine uptake protein TcyP from Bacillus cereus (strain ATCC 10987 / NRS 248).